Reading from the N-terminus, the 427-residue chain is Enolase (427 aa).

Residue Q163 coordinates (2R)-2-phosphoglycerate. The active-site Proton donor is E205. Mg(2+) is bound by residues D242, E285, and D312. The (2R)-2-phosphoglycerate site is built by K337, R366, S367, and K388. K337 functions as the Proton acceptor in the catalytic mechanism.

This sequence belongs to the enolase family. The cofactor is Mg(2+).

The protein localises to the cytoplasm. Its subcellular location is the secreted. It is found in the cell surface. The catalysed reaction is (2R)-2-phosphoglycerate = phosphoenolpyruvate + H2O. It participates in carbohydrate degradation; glycolysis; pyruvate from D-glyceraldehyde 3-phosphate: step 4/5. Catalyzes the reversible conversion of 2-phosphoglycerate (2-PG) into phosphoenolpyruvate (PEP). It is essential for the degradation of carbohydrates via glycolysis. The sequence is that of Enolase from Rhodopseudomonas palustris (strain BisA53).